The following is a 606-amino-acid chain: NADH-ubiquinone oxidoreductase chain 5 (606 aa).

A run of 14 helical transmembrane segments spans residues Met1 to Met21, Ala43 to Ile63, Met87 to Tyr107, Phe117 to Met137, Leu140 to Gly160, Ala171 to Leu191, Thr241 to Ile261, Ile273 to Leu293, Leu310 to Cys330, Val365 to Phe385, Leu409 to Phe429, Leu457 to Ile477, Met488 to Thr508, and Gly582 to Leu602.

The protein belongs to the complex I subunit 5 family. In terms of assembly, core subunit of respiratory chain NADH dehydrogenase (Complex I) which is composed of 45 different subunits.

The protein localises to the mitochondrion inner membrane. It carries out the reaction a ubiquinone + NADH + 5 H(+)(in) = a ubiquinol + NAD(+) + 4 H(+)(out). Functionally, core subunit of the mitochondrial membrane respiratory chain NADH dehydrogenase (Complex I) which catalyzes electron transfer from NADH through the respiratory chain, using ubiquinone as an electron acceptor. Essential for the catalytic activity and assembly of complex I. The protein is NADH-ubiquinone oxidoreductase chain 5 (MT-ND5) of Canis lupus (Gray wolf).